The chain runs to 99 residues: Aspartyl/glutamyl-tRNA(Asn/Gln) amidotransferase subunit C (99 aa).

The protein belongs to the GatC family. Heterotrimer of A, B and C subunits.

It carries out the reaction L-glutamyl-tRNA(Gln) + L-glutamine + ATP + H2O = L-glutaminyl-tRNA(Gln) + L-glutamate + ADP + phosphate + H(+). The enzyme catalyses L-aspartyl-tRNA(Asn) + L-glutamine + ATP + H2O = L-asparaginyl-tRNA(Asn) + L-glutamate + ADP + phosphate + 2 H(+). Allows the formation of correctly charged Asn-tRNA(Asn) or Gln-tRNA(Gln) through the transamidation of misacylated Asp-tRNA(Asn) or Glu-tRNA(Gln) in organisms which lack either or both of asparaginyl-tRNA or glutaminyl-tRNA synthetases. The reaction takes place in the presence of glutamine and ATP through an activated phospho-Asp-tRNA(Asn) or phospho-Glu-tRNA(Gln). The protein is Aspartyl/glutamyl-tRNA(Asn/Gln) amidotransferase subunit C of Delftia acidovorans (strain DSM 14801 / SPH-1).